A 78-amino-acid polypeptide reads, in one-letter code: Small ribosomal subunit protein uS19m (78 aa).

Belongs to the universal ribosomal protein uS19 family.

It is found in the mitochondrion. This chain is Small ribosomal subunit protein uS19m (RPS19), found in Acanthamoeba castellanii (Amoeba).